Consider the following 385-residue polypeptide: Transcription termination factor 2, mitochondrial (385 aa).

A mitochondrion-targeting transit peptide spans 1-35 (MLWKLLLRSQSCRLCSFRKMRSPPKYRPFLACFTY).

The protein belongs to the mTERF family. As to quaternary structure, monomer. In terms of tissue distribution, expressed in skeletal muscle, heart, liver and pancreas.

It localises to the mitochondrion. The protein resides in the mitochondrion matrix. It is found in the mitochondrion nucleoid. Its function is as follows. Binds mitochondrial DNA and plays a role in the regulation of transcription of mitochondrial mRNA and rRNA species. This is Transcription termination factor 2, mitochondrial (MTERF2) from Homo sapiens (Human).